We begin with the raw amino-acid sequence, 320 residues long: MAAAAAAAAATEQQGSNGPVKKSMREKAVERRNVNKEHNSNFKAGYIPIDEDRLHKTGLRGRKGNLAICVIVLLFILAVINLLITLVIWAVIRIGPNGCDSMEFHESGLLRFKQVSDMGVIHPLYKSTVGGRRNENLVITGNNQPIVFQQGTTKLSVEKNKTSITSDIGMQFFDPRTHNILFSTDYETHEFHLPSGVKSLNVQKASTERITSNATSDLNIKVDGRAIVRGNEGVFIMGKTIEFHMGGDVELKAENSIILNGTVMVSPTRLPSSSSGDQSGSGDWVRYKLCMCADGTLFKVQVTGHNMGCQVSDNPCGNTH.

A compositionally biased stretch (low complexity) spans 1–10 (MAAAAAAAAA). The tract at residues 1-34 (MAAAAAAAAATEQQGSNGPVKKSMREKAVERRNV) is disordered. The Cytoplasmic segment spans residues 1 to 67 (MAAAAAAAAA…GLRGRKGNLA (67 aa)). Basic and acidic residues predominate over residues 23-34 (SMREKAVERRNV). The helical; Signal-anchor for type II membrane protein transmembrane segment at 68–88 (ICVIVLLFILAVINLLITLVI) threads the bilayer. Residues 89–320 (WAVIRIGPNG…VSDNPCGNTH (232 aa)) lie on the Extracellular side of the membrane. N160, N213, and N260 each carry an N-linked (GlcNAc...) asparagine glycan. Intrachain disulfides connect C290–C316 and C292–C309.

This sequence belongs to the sarcoglycan beta/delta/gamma/zeta family. In terms of assembly, cross-link to form 2 major subcomplexes: one consisting of SGCB, SGCD and SGCG and the other consisting of SGCB and SGCD. The association between SGCB and SGCG is particularly strong while SGCA is loosely associated with the other sarcoglycans. In terms of processing, disulfide bonds are present. Most strongly expressed in skeletal and heart muscle. Also detected in proliferating myoblasts.

It localises to the cell membrane. Its subcellular location is the sarcolemma. The protein localises to the cytoplasm. It is found in the cytoskeleton. Its function is as follows. Component of the sarcoglycan complex, a subcomplex of the dystrophin-glycoprotein complex which forms a link between the F-actin cytoskeleton and the extracellular matrix. The chain is Beta-sarcoglycan (Sgcb) from Mus musculus (Mouse).